Consider the following 135-residue polypeptide: D-ribose pyranase (135 aa).

Catalysis depends on histidine 20, which acts as the Proton donor. Residues aspartate 28, histidine 102, and 124 to 126 (YAN) contribute to the substrate site.

It belongs to the RbsD / FucU family. RbsD subfamily. Homodecamer.

It is found in the cytoplasm. It catalyses the reaction beta-D-ribopyranose = beta-D-ribofuranose. It functions in the pathway carbohydrate metabolism; D-ribose degradation; D-ribose 5-phosphate from beta-D-ribopyranose: step 1/2. Functionally, catalyzes the interconversion of beta-pyran and beta-furan forms of D-ribose. The polypeptide is D-ribose pyranase (Rhodopirellula baltica (strain DSM 10527 / NCIMB 13988 / SH1)).